Here is a 416-residue protein sequence, read N- to C-terminus: GTPase ERA1, chloroplastic (416 aa).

The transit peptide at 1–53 (MELGLALRLVAPPPLLPCLSRRALSLPPDFVSSRVLRGRRIHASRLKHGAGVV) directs the protein to the chloroplast. One can recognise an Era-type G domain in the interval 117–287 (RSGYVAVLGK…KEWILSKLPL (171 aa)). Residues 125-132 (GKPNVGKS) are G1. 125–132 (GKPNVGKS) contacts GTP. Residues 151 to 155 (QTTRH) form a G2 region. The interval 172 to 175 (DTPG) is G3. Residues 172–176 (DTPGV) and 237–240 (NKKD) each bind GTP. A G4 region spans residues 237–240 (NKKD). Residues 266 to 268 (ISA) are G5. One can recognise a KH type-2 domain in the interval 318 to 395 (YRQEIPYSCQ…YLEVEVKVKE (78 aa)).

This sequence belongs to the TRAFAC class TrmE-Era-EngA-EngB-Septin-like GTPase superfamily. Era GTPase family.

The protein resides in the plastid. It localises to the chloroplast stroma. It is found in the chloroplast nucleoid. Functionally, nuclear genome-encoded probable GTPase involved in ribosome biogenesis in chloroplasts. Plays a role in 16S rRNA maturation in plastids and may contribute to the assembly of the small (30S) ribosomal subunit. This Zea mays (Maize) protein is GTPase ERA1, chloroplastic.